The chain runs to 226 residues: 2-C-methyl-D-erythritol 4-phosphate cytidylyltransferase (226 aa).

It belongs to the IspD/TarI cytidylyltransferase family. IspD subfamily.

It carries out the reaction 2-C-methyl-D-erythritol 4-phosphate + CTP + H(+) = 4-CDP-2-C-methyl-D-erythritol + diphosphate. It functions in the pathway isoprenoid biosynthesis; isopentenyl diphosphate biosynthesis via DXP pathway; isopentenyl diphosphate from 1-deoxy-D-xylulose 5-phosphate: step 2/6. Its function is as follows. Catalyzes the formation of 4-diphosphocytidyl-2-C-methyl-D-erythritol from CTP and 2-C-methyl-D-erythritol 4-phosphate (MEP). The sequence is that of 2-C-methyl-D-erythritol 4-phosphate cytidylyltransferase from Haemophilus ducreyi (strain 35000HP / ATCC 700724).